We begin with the raw amino-acid sequence, 133 residues long: Homeobox protein HD-5 (133 aa).

A DNA-binding region (homeobox) is located at residues 34-93 (SKRSRLKLSGQQIDVLESNFKIDSHPNSATKSLLSNALSIPLKNIQIWFQNRRAKEKTAR). Residues 86-109 (RAKEKTARDGGRRRSGNAEIEDGE) form a disordered region.

It is found in the nucleus. This chain is Homeobox protein HD-5 (HD-5), found in Encephalitozoon cuniculi (strain GB-M1) (Microsporidian parasite).